Consider the following 408-residue polypeptide: BRCA1-A complex subunit Abraxas 1 (408 aa).

Residues 7 to 155 (TAVISGFVFG…KSTHRLEYAL (149 aa)) enclose the MPN domain. Residues 210 to 272 (ALAEVNRISD…MEEKGNKVSE (63 aa)) adopt a coiled-coil conformation. Positions 335 to 408 (HRRQAGKRKA…EVSRSKSPTF (74 aa)) are disordered. Residues 337-358 (RQAGKRKAHSKQLGKTSTKKSR) are compositionally biased toward basic residues. Positions 394 to 408 (QSLNVEVSRSKSPTF) are enriched in polar residues. Position 405 is a phosphoserine (Ser-405). The pSXXF motif signature appears at 405–408 (SPTF).

It belongs to the FAM175 family. Abraxas subfamily. As to quaternary structure, component of the BRCA1-A complex. Component of the BRISC complex. Homodimer. Interacts directly (when phosphorylated at Ser-405) with brca1. The phosphorylated homodimer can interact directly with two brca1 chains, giving rise to a heterotetramer. In terms of processing, phosphorylation of Ser-405 of the pSXXF motif by ATM or ATR constitutes a specific recognition motif for the BRCT domain of BRCA1.

It localises to the nucleus. Its function is as follows. Involved in DNA damage response and double-strand break (DSB) repair. Component of the BRCA1-A complex, acting as a central scaffold protein that assembles the various components of the complex and mediates the recruitment of brca1. The BRCA1-A complex specifically recognizes 'Lys-63'-linked ubiquitinated histones H2A and H2AX at DNA lesion sites, leading to target the brca1-bard1 heterodimer to sites of DNA damage at DSBs. This complex also possesses deubiquitinase activity that specifically removes 'Lys-63'-linked ubiquitin on histones H2A and H2AX. This is BRCA1-A complex subunit Abraxas 1 from Xenopus laevis (African clawed frog).